A 71-amino-acid polypeptide reads, in one-letter code: Cytochrome c oxidase subunit 8C, mitochondrial (71 aa).

A mitochondrion-targeting transit peptide spans 1-28 (MAHLPRVCPFIRRLRVALLCLRPGHRFA). The Mitochondrial matrix segment spans residues 29 to 39 (HSEPQRQRPAS). The helical transmembrane segment at 40-63 (ALEMAVGIVVIFSAFLTPSAYVLS) threads the bilayer. The Mitochondrial intermembrane portion of the chain corresponds to 64–71 (NLSQFRRE).

This sequence belongs to the cytochrome c oxidase VIII family. Component of the cytochrome c oxidase (complex IV, CIV), a multisubunit enzyme composed of 14 subunits. The complex is composed of a catalytic core of 3 subunits MT-CO1, MT-CO2 and MT-CO3, encoded in the mitochondrial DNA, and 11 supernumerary subunits COX4I, COX5A, COX5B, COX6A, COX6B, COX6C, COX7A, COX7B, COX7C, COX8 and NDUFA4, which are encoded in the nuclear genome. The complex exists as a monomer or a dimer and forms supercomplexes (SCs) in the inner mitochondrial membrane with NADH-ubiquinone oxidoreductase (complex I, CI) and ubiquinol-cytochrome c oxidoreductase (cytochrome b-c1 complex, complex III, CIII), resulting in different assemblies (supercomplex SCI(1)III(2)IV(1) and megacomplex MCI(2)III(2)IV(2)).

The protein localises to the mitochondrion inner membrane. Its pathway is energy metabolism; oxidative phosphorylation. In terms of biological role, component of the cytochrome c oxidase, the last enzyme in the mitochondrial electron transport chain which drives oxidative phosphorylation. The respiratory chain contains 3 multisubunit complexes succinate dehydrogenase (complex II, CII), ubiquinol-cytochrome c oxidoreductase (cytochrome b-c1 complex, complex III, CIII) and cytochrome c oxidase (complex IV, CIV), that cooperate to transfer electrons derived from NADH and succinate to molecular oxygen, creating an electrochemical gradient over the inner membrane that drives transmembrane transport and the ATP synthase. Cytochrome c oxidase is the component of the respiratory chain that catalyzes the reduction of oxygen to water. Electrons originating from reduced cytochrome c in the intermembrane space (IMS) are transferred via the dinuclear copper A center (CU(A)) of subunit 2 and heme A of subunit 1 to the active site in subunit 1, a binuclear center (BNC) formed by heme A3 and copper B (CU(B)). The BNC reduces molecular oxygen to 2 water molecules using 4 electrons from cytochrome c in the IMS and 4 protons from the mitochondrial matrix. In Eulemur fulvus fulvus (Brown lemur), this protein is Cytochrome c oxidase subunit 8C, mitochondrial (COX8C).